Reading from the N-terminus, the 164-residue chain is NADH-quinone oxidoreductase subunit C (164 aa).

The protein belongs to the complex I 30 kDa subunit family. As to quaternary structure, NDH-1 is composed of 14 different subunits. Subunits NuoB, C, D, E, F, and G constitute the peripheral sector of the complex.

It localises to the cell inner membrane. The catalysed reaction is a quinone + NADH + 5 H(+)(in) = a quinol + NAD(+) + 4 H(+)(out). Its function is as follows. NDH-1 shuttles electrons from NADH, via FMN and iron-sulfur (Fe-S) centers, to quinones in the respiratory chain. The immediate electron acceptor for the enzyme in this species is believed to be ubiquinone. Couples the redox reaction to proton translocation (for every two electrons transferred, four hydrogen ions are translocated across the cytoplasmic membrane), and thus conserves the redox energy in a proton gradient. This chain is NADH-quinone oxidoreductase subunit C, found in Geotalea uraniireducens (strain Rf4) (Geobacter uraniireducens).